The sequence spans 117 residues: Large ribosomal subunit protein bL20 (117 aa).

This sequence belongs to the bacterial ribosomal protein bL20 family.

Functionally, binds directly to 23S ribosomal RNA and is necessary for the in vitro assembly process of the 50S ribosomal subunit. It is not involved in the protein synthesizing functions of that subunit. The sequence is that of Large ribosomal subunit protein bL20 from Wolinella succinogenes (strain ATCC 29543 / DSM 1740 / CCUG 13145 / JCM 31913 / LMG 7466 / NCTC 11488 / FDC 602W) (Vibrio succinogenes).